A 147-amino-acid polypeptide reads, in one-letter code: Large ribosomal subunit protein uL15 (147 aa).

The span at 1 to 14 shows a compositional bias: basic and acidic residues; the sequence is MKLHELRPAEGAVR. Residues 1–54 form a disordered region; it reads MKLHELRPAEGAVRDRKRKGRGTASGLGKTAGRGSNGQKARSGGGVRPGFEGGQ. Gly residues-rich tracts occupy residues 23 to 35 and 42 to 52; these read TASG…GRGS and SGGGVRPGFEG.

Belongs to the universal ribosomal protein uL15 family. Part of the 50S ribosomal subunit.

In terms of biological role, binds to the 23S rRNA. This is Large ribosomal subunit protein uL15 from Alkaliphilus oremlandii (strain OhILAs) (Clostridium oremlandii (strain OhILAs)).